Here is a 299-residue protein sequence, read N- to C-terminus: Non-structural protein V (299 aa).

The disordered stretch occupies residues 40 to 98; sequence SDNPGQEQATCKEEEAGASGLSKPCLSAIGSTEGGAPRIRGQGSGESDDDTETLGFPSR. The segment at 110 to 120 is interaction with host STAT1; it reads YYVYDHSGEAV. Over residues 134–145 the composition is skewed to low complexity; that stretch reads GLDGDSTLSGGD. Disordered regions lie at residues 134-174 and 204-230; these read GLDG…APIS and PKLG…PIKK. The span at 146–160 shows a compositional bias: acidic residues; the sequence is NESENSDVDIGEPDT. The Zn(2+) site is built by His-232, Cys-251, Cys-255, Cys-267, Cys-269, Cys-272, Cys-276, and Cys-279.

The protein belongs to the paramyxoviruses V protein family. As to quaternary structure, interacts with host IFIH1/MDA5 and DHX58/LGP2; these interactions are involved in the inhibition of the host type I interferon signaling pathway. Interacts with host TYK2; this interaction inhibits the type I interferon signaling pathway without affecting the type II pathway. Interacts with host IRF7; this interaction inhibits IRF7 translocation to the nucleus. Interacts with host CHUK. Interacts with host RELA/p65; this interaction inhibits the nuclear translocation of NF-KappaB. Interacts (via N-terminus) with host STAT1 and JAK1; these interactions inhibit STAT1 phosphorylation by Jak1 and thereby the type I interferon signaling pathway. Interacts (via C-terminus) with host STAT2; this interaction is involved in the inhibition of the host type I interferon signaling pathway. Forms a complex with host PPP1CA and PPP1CC; this interaction prevents dephosphorylation of host IFIH1/MDA5 and leads to the inhibition of the host type I interferon signaling pathway. Interacts with host IRF9; this interaction prevents the binding of IRF9 to STAT2 and thereby the type I interferon signaling pathway. Interacts with host RIGI regulatory protein (via CARDs domain) and host TRIM25 (via SPRY domain); these interactions prevent TRIM25-mediated ubiquitination of RIG-I and disrupts downstream RIG-I signaling.

It is found in the host cytoplasm. Functionally, plays an essential role in the inhibition of host immune response. Prevents the establishment of cellular antiviral state by blocking interferon-alpha/beta (IFN-alpha/beta) production and signaling pathway. Interacts with host IFIH1/MDA5 and DHX58/LGP2 to inhibit the transduction pathway involved in the activation of IFN-beta promoter, thus protecting the virus against cell antiviral state. Blocks the type I interferon signaling pathway by interacting with host TYK2 and thereby inhibiting downstream STAT1 and STAT2 phosphorylation. Blocks the type I interferon signaling pathway by disrupting the RIG-I signaling pathway. Moderately affects the type II interferon signaling. Prevents PP1alpha/gamma-mediated dephosphorylation of host IFIH1/MDA5 and thus blocks its activation. The chain is Non-structural protein V (P/V) from Measles virus (strain IP-3-Ca) (MeV).